The chain runs to 587 residues: Glucosylglycerate phosphorylase (587 aa).

Aspartate 236 serves as the catalytic Nucleophile.

It belongs to the glycosyl hydrolase 13 family. Glucosylglycerate phosphorylase subfamily.

It carries out the reaction (2R)-2-O-(alpha-D-glucopyranosyl)-glycerate + phosphate = (R)-glycerate + alpha-D-glucose 1-phosphate. In terms of biological role, catalyzes the reversible phosphorolysis of glucosylglycerate into alpha-D-glucose 1-phosphate (Glc1P) and D-glycerate. May be a regulator of intracellular levels of glucosylglycerate, a compatible solute that primarily protects organisms facing salt stress and very specific nutritional constraints. Cannot catalyze the phosphorolysis of sucrose. This is Glucosylglycerate phosphorylase from Spirochaeta thermophila (strain ATCC 700085 / DSM 6578 / Z-1203).